A 504-amino-acid polypeptide reads, in one-letter code: Maturase K (504 aa).

Belongs to the intron maturase 2 family. MatK subfamily.

The protein localises to the plastid. It localises to the chloroplast. Usually encoded in the trnK tRNA gene intron. Probably assists in splicing its own and other chloroplast group II introns. The chain is Maturase K from Cardamine amara (Large bitter-cress).